We begin with the raw amino-acid sequence, 451 residues long: ACT domain-containing protein ACR4 (451 aa).

ACT domains are found at residues 35–118 (VIRV…VIPS), 123–200 (VIEL…NTPR), 259–335 (VVTV…VSEG), and 337–416 (KLEL…QEQQ). The disordered stretch occupies residues 409-428 (KNNPQEQQQRQKSPSHESPT). Over residues 410–420 (NNPQEQQQRQK) the composition is skewed to polar residues.

Highly expressed in flowers and at lower levels in leaves and siliques.

May bind amino acids. The chain is ACT domain-containing protein ACR4 from Arabidopsis thaliana (Mouse-ear cress).